The sequence spans 721 residues: Xylosyl- and glucuronyltransferase LARGE2 (721 aa).

At 1–8 the chain is on the cytoplasmic side; it reads MLPRGRPR. The helical; Signal-anchor for type II membrane protein transmembrane segment at 9–29 threads the bilayer; sequence ALGAAALLLLLLLLGFLLFGG. Residues 30-721 are Lumenal-facing; the sequence is DLGCERREPG…LQQPQSPARG (692 aa). A disordered region spans residues 59–89; the sequence is DGRLRRAAALDGDPGAGPGDHNRSDCGPQPP. N-linked (GlcNAc...) asparagine glycans are attached at residues asparagine 80 and asparagine 107. Residues 97 to 372 form a xylosyltransferase activity region; that stretch reads LHVAIVCAGH…FLEYDGNLLR (276 aa). Mn(2+)-binding residues include aspartate 201 and aspartate 203. An N-linked (GlcNAc...) asparagine glycan is attached at asparagine 231. The interval 373-715 is glucuronyltransferase activity; sequence RELFVCPSQP…LKYLPALQQP (343 aa). Mn(2+)-binding residues include aspartate 521 and aspartate 523.

The protein in the C-terminal section; belongs to the glycosyltransferase 49 family. In the N-terminal section; belongs to the glycosyltransferase 8 family. As to quaternary structure, interacts with B4GAT1. The cofactor is Mn(2+). As to expression, widely expressed. Expressed at high level in placenta, pancreas and kidney compared to LARGE. Not expressed in brain.

The protein resides in the golgi apparatus membrane. It carries out the reaction 3-O-[beta-D-GlcA-(1-&gt;3)-beta-D-Xyl-(1-&gt;4)-Rib-ol-P-Rib-ol-P-3-beta-D-GalNAc-(1-&gt;3)-beta-D-GlcNAc-(1-&gt;4)-(O-6-P-alpha-D-Man)]-Thr-[protein] + UDP-alpha-D-xylose = 3-O-[alpha-D-Xyl-(1-&gt;3)-beta-D-GlcA-(1-&gt;4)-beta-D-Xyl-(1-&gt;4)-Rib-ol-P-Rib-ol-P-3-beta-D-GalNAc-(1-&gt;3)-beta-D-GlcNAc-(1-&gt;4)-(O-6-P-alpha-D-Man)]-Thr-[protein] + UDP + H(+). It catalyses the reaction 3-O-{(1-&gt;[3)-alpha-D-Xyl-(1-&gt;3)-beta-D-GlcA-(1-&gt;](n)-4)-beta-D-Xyl-(1-&gt;4)-Rib-ol-P-Rib-ol-P-3-beta-D-GalNAc-(1-&gt;3)-beta-D-GlcNAc-(1-&gt;4)-O-6-P-alpha-D-Man}-L-Thr-[protein] + UDP-alpha-D-glucuronate = 3-O-{beta-D-GlcA-(1-&gt;[3)-alpha-D-Xyl-(1-&gt;3)-beta-D-GlcA-(1-&gt;](n)-4)-beta-D-Xyl-(1-&gt;4)-Rib-ol-P-Rib-ol-P-3-beta-D-GalNAc-(1-&gt;3)-beta-D-GlcNAc-(1-&gt;4)-O-6-P-alpha-D-Man}-L-Thr-[protein] + UDP + H(+). The enzyme catalyses 3-O-{beta-D-GlcA-(1-&gt;[3)-alpha-D-Xyl-(1-&gt;3)-beta-D-GlcA-(1-&gt;](n)-4)-beta-D-Xyl-(1-&gt;4)-Rib-ol-P-Rib-ol-P-3-beta-D-GalNAc-(1-&gt;3)-beta-D-GlcNAc-(1-&gt;4)-O-6-P-alpha-D-Man}-L-Thr-[protein] + UDP-alpha-D-xylose = 3-O-{(1-&gt;[3)-alpha-D-Xyl-(1-&gt;3)-beta-D-GlcA-(1-&gt;](n+1)-4)-beta-D-Xyl-(1-&gt;4)-Rib-ol-P-Rib-ol-P-3-beta-D-GalNAc-(1-&gt;3)-beta-D-GlcNAc-(1-&gt;4)-O-6-P-alpha-D-Man}-L-Thr-[protein] + UDP + H(+). The protein operates within protein modification; protein glycosylation. In terms of biological role, bifunctional glycosyltransferase with both alpha-1,3-xylosyltransferase and beta-1,3-glucuronyltransferase activities involved in the maturation of alpha-dystroglycan (DAG1) by glycosylation leading to DAG1 binding to laminin G-like domain-containing extracellular proteins with high affinity and in a phosphorylated-O-mannosyl trisaccharide dependent manner. Elongates the glucuronyl-beta-1,4-xylose-beta disaccharide primer structure by adding repeating units [-3-Xylose-alpha-1,3-GlcA-beta-1-] to produce a heteropolysaccharide. Supports the maturation of DAG1 more effectively than LARGE1. In addition, can modify both heparan sulfate (HS)- and chondroitin/dermatan sulfate (CS/DS)-proteoglycans (PGs), namely GPC4, with a glycosaminoglycan (GAG)-like polysaccharide composed of xylose and glucuronic acid to confer laminin binding. This Homo sapiens (Human) protein is Xylosyl- and glucuronyltransferase LARGE2.